The following is a 278-amino-acid chain: 4-deoxy-L-threo-5-hexosulose-uronate ketol-isomerase (278 aa).

Zn(2+) is bound by residues H196, H198, E203, and H245.

It belongs to the KduI family. As to quaternary structure, homohexamer. The cofactor is Zn(2+).

The enzyme catalyses 5-dehydro-4-deoxy-D-glucuronate = 3-deoxy-D-glycero-2,5-hexodiulosonate. The protein operates within glycan metabolism; pectin degradation; 2-dehydro-3-deoxy-D-gluconate from pectin: step 4/5. Functionally, catalyzes the isomerization of 5-dehydro-4-deoxy-D-glucuronate to 3-deoxy-D-glycero-2,5-hexodiulosonate. The protein is 4-deoxy-L-threo-5-hexosulose-uronate ketol-isomerase of Escherichia coli O127:H6 (strain E2348/69 / EPEC).